The following is a 122-amino-acid chain: S-protein homolog 23 (122 aa).

An N-terminal signal peptide occupies residues 1-20 (MQNLSILLVCSFCILGHVSS). N-linked (GlcNAc...) asparagine glycosylation is present at Asn86.

This sequence belongs to the plant self-incompatibility (S1) protein family.

It localises to the secreted. The chain is S-protein homolog 23 from Arabidopsis thaliana (Mouse-ear cress).